A 204-amino-acid polypeptide reads, in one-letter code: Protease (204 aa).

Residues H54, D71, and C121 contribute to the active site.

The protein belongs to the peptidase C5 family. Interacts with protease cofactor pVI-C; this interaction is necessary for protease activation.

The protein resides in the virion. The protein localises to the host nucleus. It catalyses the reaction Cleaves proteins of the adenovirus and its host cell at two consensus sites: -Yaa-Xaa-Gly-Gly-|-Xaa- and -Yaa-Xaa-Gly-Xaa-|-Gly- (in which Yaa is Met, Ile or Leu, and Xaa is any amino acid).. Its activity is regulated as follows. Requires DNA and protease cofactor for maximal activation. Inside nascent virions, becomes partially activated by binding to the viral DNA, allowing it to cleave the cofactor that binds to the protease and fully activates it. Actin, like the viral protease cofactor, seems to act as a cofactor in the cleavage of cytokeratin 18 and of actin itself. Functionally, cleaves viral precursor proteins (pTP, pIIIa, pVI, pVII, pVIII, and pX) inside newly assembled particles giving rise to mature virions. Protease complexed to its cofactor slides along the viral DNA to specifically locate and cleave the viral precursors. Mature virions have a weakened organization compared to the unmature virions, thereby facilitating subsequent uncoating. Without maturation, the particle lacks infectivity and is unable to uncoat. Late in adenovirus infection, in the cytoplasm, may participate in the cytoskeleton destruction. Cleaves host cell cytoskeletal keratins K7 and K18. The chain is Protease from Frog adenovirus 1 (strain ATCC VR-896) (FrAdV-1).